The sequence spans 291 residues: Small ribosomal subunit biogenesis GTPase RsgA (291 aa).

The CP-type G domain occupies 63–221 (HNELKRPPVS…IADTPGFSAL (159 aa)). GTP-binding positions include 112 to 115 (TKKD) and 164 to 172 (GQSGVGKST). Positions 245, 250, 252, and 258 each coordinate Zn(2+).

Belongs to the TRAFAC class YlqF/YawG GTPase family. RsgA subfamily. As to quaternary structure, monomer. Associates with 30S ribosomal subunit, binds 16S rRNA. It depends on Zn(2+) as a cofactor.

The protein localises to the cytoplasm. Functionally, one of several proteins that assist in the late maturation steps of the functional core of the 30S ribosomal subunit. Helps release RbfA from mature subunits. May play a role in the assembly of ribosomal proteins into the subunit. Circularly permuted GTPase that catalyzes slow GTP hydrolysis, GTPase activity is stimulated by the 30S ribosomal subunit. The chain is Small ribosomal subunit biogenesis GTPase RsgA from Staphylococcus haemolyticus (strain JCSC1435).